A 434-amino-acid chain; its full sequence is MNITFIGSGYVGLVSGVMMSYLGHNVTCLDNDEAKISKLNKRILPIYETKLDKYFTQALEHERLKFTSFYNEELKNTEAVFITVGTPSKASGEADLSYVYEAIDKISLHINKDCLIVIKSTVPPNSCNNIINYLKEKGFSFNVASNPEFLREGNAVEDFLYPDRIVIGVNNKESEDILRKIYMPLTDNGAELVITDLVTAELIKYGSNSFLATKIAFINEMANLCEKIGADIKNLSKGIGLDKRIGTAFLNAGPGFGGSCFPKDILALNSIIKNNYIDSKILEAVIRSNKERPSLMVDKIATLLDEDLKGKNIAVLGLTYKAGTDDVRASPAIEIIKNLLDKGTYVKAFDPMGLENSQKTFQNENLLYLDSAIKVCDSSDAIIITTEWSEFQALDWQKIYSLVKTPIIIDLRNILKADEVESIGFRYYTVGSKI.

NAD(+)-binding positions include 2 to 19, V11, D30, K35, T121, and E152; that span reads NITF…GVMM. Substrate contacts are provided by residues 148-152, K204, N208, 249-253, and G257; these read EFLRE and FLNAG. The active-site Nucleophile is the C260. K263 serves as a coordination point for NAD(+). K321 is a substrate binding site. Residue R328 coordinates NAD(+).

Belongs to the UDP-glucose/GDP-mannose dehydrogenase family.

The enzyme catalyses UDP-alpha-D-glucose + 2 NAD(+) + H2O = UDP-alpha-D-glucuronate + 2 NADH + 3 H(+). Its pathway is nucleotide-sugar biosynthesis; UDP-alpha-D-glucuronate biosynthesis; UDP-alpha-D-glucuronate from UDP-alpha-D-glucose: step 1/1. The chain is UDP-glucose 6-dehydrogenase (udg) from Rickettsia bellii (strain RML369-C).